The following is a 336-amino-acid chain: Ketol-acid reductoisomerase (NADP(+)) 1 (336 aa).

Positions 2-181 (AKVYYEKDVT…GATRAGVLET (180 aa)) constitute a KARI N-terminal Rossmann domain. NADP(+) is bound by residues 25-28 (YGSQ), R48, S52, and 82-85 (DELQ). Residue H107 is part of the active site. Residue G133 coordinates NADP(+). The KARI C-terminal knotted domain occupies 182 to 327 (TFKEETETDL…RKLREMMPFV (146 aa)). Positions 190, 194, 226, and 230 each coordinate Mg(2+). S251 lines the substrate pocket.

This sequence belongs to the ketol-acid reductoisomerase family. Requires Mg(2+) as cofactor.

The enzyme catalyses (2R)-2,3-dihydroxy-3-methylbutanoate + NADP(+) = (2S)-2-acetolactate + NADPH + H(+). It catalyses the reaction (2R,3R)-2,3-dihydroxy-3-methylpentanoate + NADP(+) = (S)-2-ethyl-2-hydroxy-3-oxobutanoate + NADPH + H(+). It functions in the pathway amino-acid biosynthesis; L-isoleucine biosynthesis; L-isoleucine from 2-oxobutanoate: step 2/4. Its pathway is amino-acid biosynthesis; L-valine biosynthesis; L-valine from pyruvate: step 2/4. Involved in the biosynthesis of branched-chain amino acids (BCAA). Catalyzes an alkyl-migration followed by a ketol-acid reduction of (S)-2-acetolactate (S2AL) to yield (R)-2,3-dihydroxy-isovalerate. In the isomerase reaction, S2AL is rearranged via a Mg-dependent methyl migration to produce 3-hydroxy-3-methyl-2-ketobutyrate (HMKB). In the reductase reaction, this 2-ketoacid undergoes a metal-dependent reduction by NADPH to yield (R)-2,3-dihydroxy-isovalerate. In Bacillus cereus (strain ZK / E33L), this protein is Ketol-acid reductoisomerase (NADP(+)) 1.